The following is a 233-amino-acid chain: NAD-dependent protein deacylase (233 aa).

The Deacetylase sirtuin-type domain occupies methionine 1–aspartate 230. Glycine 9–tryptophan 28 is an NAD(+) binding site. Substrate contacts are provided by tyrosine 53 and arginine 56. Glutamine 88–aspartate 91 provides a ligand contact to NAD(+). Histidine 106 (proton acceptor) is an active-site residue. Zn(2+)-binding residues include cysteine 114, cysteine 117, cysteine 133, and cysteine 136. NAD(+) contacts are provided by residues glycine 172–serine 174 and asparagine 200–glutamate 202.

It belongs to the sirtuin family. Class III subfamily. Zn(2+) is required as a cofactor.

It is found in the cytoplasm. The catalysed reaction is N(6)-acetyl-L-lysyl-[protein] + NAD(+) + H2O = 2''-O-acetyl-ADP-D-ribose + nicotinamide + L-lysyl-[protein]. The enzyme catalyses N(6)-succinyl-L-lysyl-[protein] + NAD(+) + H2O = 2''-O-succinyl-ADP-D-ribose + nicotinamide + L-lysyl-[protein]. In terms of biological role, NAD-dependent lysine deacetylase and desuccinylase that specifically removes acetyl and succinyl groups on target proteins. Modulates the activities of several proteins which are inactive in their acylated form. In Campylobacter jejuni subsp. jejuni serotype O:2 (strain ATCC 700819 / NCTC 11168), this protein is NAD-dependent protein deacylase.